Reading from the N-terminus, the 228-residue chain is uncharacterized protein (228 aa).

Belongs to the HAD-like hydrolase superfamily.

The protein resides in the cytoplasm. It localises to the nucleus. This is an uncharacterized protein from Schizosaccharomyces pombe (strain 972 / ATCC 24843) (Fission yeast).